A 474-amino-acid chain; its full sequence is PRAME family member 13 (474 aa).

Residues 97 to 124 (RRKLQVLDLRDVDENFWARWPGAWALSC) form an LRR 1; degenerate repeat. An LRR 2; degenerate repeat occupies 179–203 (HLCCSKLVNYLTPIKHLRKSLKIIY). The stretch at 204–230 (LNSIQELEIHNMSWPRLIRKLRCYLKE) is one LRR 3; degenerate repeat. An LRR 4; degenerate repeat occupies 231 to 265 (MKTLGKLVFSRCHHSTSDNELEGRLVTKFSSVFLG). 5 LRR repeats span residues 266-291 (LEHL…IRCL), 292-323 (QNPL…GYLK), 324-342 (HLNL…PLGA), 348-375 (AASL…GLSR), and 376-400 (CSQL…LLRH).

The protein belongs to the PRAME family.

This chain is PRAME family member 13, found in Homo sapiens (Human).